We begin with the raw amino-acid sequence, 22 residues long: Peptide PGLa-BM3 (22 aa).

The residue at position 22 (Leu22) is a Leucine amide.

In terms of tissue distribution, expressed by the skin glands.

The protein resides in the secreted. Antimicrobial peptide. The chain is Peptide PGLa-BM3 from Xenopus boumbaensis (Mawa clawed frog).